We begin with the raw amino-acid sequence, 208 residues long: CASP-like protein 3A1 (208 aa).

2 stretches are compositionally biased toward polar residues: residues 1–11 and 17–33; these read MGSFANGQNGS and TPAT…TTSA. Residues 1-33 form a disordered region; the sequence is MGSFANGQNGSELGIQTPATGSNAALEPPTTSA. The Cytoplasmic segment spans residues 1 to 43; that stretch reads MGSFANGQNGSELGIQTPATGSNAALEPPTTSAAAPRCPRLGM. Residues 44–64 form a helical membrane-spanning segment; that stretch reads AMVAARAAALVMALLSVSLMV. The Extracellular segment spans residues 65-92; sequence SAKQRGTLAIFGIEIPLYAKWSLSDSLQ. The chain crosses the membrane as a helical span at residues 93–113; it reads SLVGISAAAAAYSLAQLLSIA. The Cytoplasmic portion of the chain corresponds to 114–128; the sequence is HTALKKAPVVPSRRY. A helical transmembrane segment spans residues 129-149; that stretch reads AWMLLAGDQVFAYAMLSAGSA. The Extracellular segment spans residues 150-183; that stretch reads AAAVANLNRTGVRHTALPNFCKPLPRFCDLSAAS. N-linked (GlcNAc...) asparagine glycosylation occurs at Asn157. A helical membrane pass occupies residues 184-204; sequence IACAFLGCAFLAASAVIDVIW. Topologically, residues 205–208 are cytoplasmic; the sequence is LSRL.

This sequence belongs to the Casparian strip membrane proteins (CASP) family. Homodimer and heterodimers.

It localises to the cell membrane. The sequence is that of CASP-like protein 3A1 from Hordeum vulgare subsp. vulgare (Domesticated barley).